The chain runs to 305 residues: Protoheme IX farnesyltransferase 2 (305 aa).

A run of 8 helical transmembrane segments spans residues 38 to 58 (LITTFTGMWLALHISGLSFLG), 60 to 80 (INTVLLTLIGSSLIIAGSCAI), 115 to 135 (ILLVALGLIMLLMTTVMAAVI), 157 to 177 (INTVVGSVSGAVPPLIGWTAV), 181 to 201 (IGVVAWVLFMILFIWQIPHFL), 227 to 247 (VTKRQIIVWVACLMPLPFFLG), 249 to 269 (LGLPIVILGLLLNIGWLILGL), and 285 to 305 (FVYSLNYMTIYFVAMVVLTLF).

This sequence belongs to the UbiA prenyltransferase family. Protoheme IX farnesyltransferase subfamily. Interacts with CtaA.

Its subcellular location is the cell membrane. It catalyses the reaction heme b + (2E,6E)-farnesyl diphosphate + H2O = Fe(II)-heme o + diphosphate. It functions in the pathway porphyrin-containing compound metabolism; heme O biosynthesis; heme O from protoheme: step 1/1. Its function is as follows. Converts heme B (protoheme IX) to heme O by substitution of the vinyl group on carbon 2 of heme B porphyrin ring with a hydroxyethyl farnesyl side group. The polypeptide is Protoheme IX farnesyltransferase 2 (ctaB2) (Bacillus subtilis (strain 168)).